Consider the following 433-residue polypeptide: Protein arginine N-methyltransferase 2 (433 aa).

Positions 1–20 (MATSGDCPRSESQGEEPAEC) are disordered. Interaction with ESR1 stretches follow at residues 1–277 (MATS…SALK) and 133–275 (KESL…NLSA). Residues 30–89 (VQPEEFVAIADYAATDETQLSFLRGEKILILRQTTADWWWGERAGCCGYIPANHVGKHVD) form the SH3 domain. Asymmetric dimethylarginine occurs at positions 61 and 72. The interaction with RB1 stretch occupies residues 83–207 (HVGKHVDEYD…DVVLPEKVDV (125 aa)). An SAM-dependent MTase PRMT-type domain is found at 99-432 (DEEYFGSYGT…KVGEKVFPIW (334 aa)). Residues histidine 112, arginine 121, glycine 145, glutamate 168, and glutamate 197 each contribute to the S-adenosyl-L-methionine site. Residues glutamate 211 and glutamate 220 contribute to the active site.

Belongs to the class I-like SAM-binding methyltransferase superfamily. Protein arginine N-methyltransferase family. As to quaternary structure, self-associates. Interacts with RB1 and E2F1. Interacts with NCOA6 coactivator. Interacts (via SH3 domain) with PRMT8. Interacts with AR. Interacts with NFKBIA. Interacts with ESR1, ESR2, PGR, PPARG, RARA, RXRA and THRB. Interacts with HNRNPUL1. Widely expressed. Highly expressed in androgen target organs such as heart, prostate, skeletal muscle, ovary and spinal cord.

It localises to the cytoplasm. Its subcellular location is the nucleus. The protein localises to the nucleolus. The enzyme catalyses L-arginyl-[protein] + 2 S-adenosyl-L-methionine = N(omega),N(omega)-dimethyl-L-arginyl-[protein] + 2 S-adenosyl-L-homocysteine + 2 H(+). Its function is as follows. Arginine methyltransferase that methylates the guanidino nitrogens of arginyl residues in proteins such as STAT3, FBL, histone H4. Acts as a coactivator (with NCOA2) of the androgen receptor (AR)-mediated transactivation. Acts as a coactivator (with estrogen) of estrogen receptor (ER)-mediated transactivation. Enhances PGR, PPARG, RARA-mediated transactivation. May inhibit NF-kappa-B transcription and promote apoptosis. Represses E2F1 transcriptional activity (in a RB1-dependent manner). May be involved in growth regulation. The sequence is that of Protein arginine N-methyltransferase 2 (PRMT2) from Homo sapiens (Human).